Consider the following 361-residue polypeptide: RLA class I histocompatibility antigen, alpha chain 11/11 (361 aa).

The signal sequence occupies residues methionine 1–alanine 24. Positions glycine 25–alanine 114 are alpha-1. The Extracellular segment spans residues glycine 25–isoleucine 308. N-linked (GlcNAc...) asparagine glycosylation is present at asparagine 110. Residues glycine 115–alanine 206 form an alpha-2 region. Intrachain disulfides connect cysteine 125–cysteine 188 and cysteine 227–cysteine 283. The interval aspartate 207–tryptophan 298 is alpha-3. The Ig-like C1-type domain maps to proline 209 to threonine 297. Residues glutamate 299–isoleucine 308 are connecting peptide. Residues valine 309 to valine 329 form a helical membrane-spanning segment. Over arginine 330–proline 361 the chain is Cytoplasmic. The tract at residues serine 335 to proline 361 is disordered. Phosphoserine occurs at positions 355 and 358.

The protein belongs to the MHC class I family. As to quaternary structure, heterodimer of an alpha chain and a beta chain (beta-2-microglobulin).

The protein resides in the membrane. Functionally, involved in the presentation of foreign antigens to the immune system. In Oryctolagus cuniculus (Rabbit), this protein is RLA class I histocompatibility antigen, alpha chain 11/11.